The following is a 423-amino-acid chain: Carboxypeptidase S1 (423 aa).

Intrachain disulfides connect Cys8–Cys68, Cys55–Cys300, Cys223–Cys246, and Cys230–Cys239. Ser143 is a catalytic residue. N-linked (GlcNAc...) asparagine glycosylation is present at Asn200. Residue Asp340 is part of the active site. Cys343 contacts substrate. Residue His397 is part of the active site. Residue Glu398 participates in substrate binding.

It belongs to the peptidase S10 family.

The catalysed reaction is Preferential release of a C-terminal arginine or lysine residue.. This chain is Carboxypeptidase S1, found in Penicillium janthinellum (Penicillium vitale).